The following is a 310-amino-acid chain: Phosphoribosylaminoimidazole-succinocarboxamide synthase (310 aa).

This sequence belongs to the SAICAR synthetase family.

It catalyses the reaction 5-amino-1-(5-phospho-D-ribosyl)imidazole-4-carboxylate + L-aspartate + ATP = (2S)-2-[5-amino-1-(5-phospho-beta-D-ribosyl)imidazole-4-carboxamido]succinate + ADP + phosphate + 2 H(+). It functions in the pathway purine metabolism; IMP biosynthesis via de novo pathway; 5-amino-1-(5-phospho-D-ribosyl)imidazole-4-carboxamide from 5-amino-1-(5-phospho-D-ribosyl)imidazole-4-carboxylate: step 1/2. This is Phosphoribosylaminoimidazole-succinocarboxamide synthase from Cytophaga hutchinsonii (strain ATCC 33406 / DSM 1761 / CIP 103989 / NBRC 15051 / NCIMB 9469 / D465).